We begin with the raw amino-acid sequence, 428 residues long: Dihydroorotase (428 aa).

The Zn(2+) site is built by histidine 59 and histidine 61. Substrate contacts are provided by residues 61-63 (HLR) and asparagine 93. Zn(2+)-binding residues include aspartate 151, histidine 178, and histidine 231. Residue asparagine 277 coordinates substrate. Aspartate 304 lines the Zn(2+) pocket. Aspartate 304 is a catalytic residue. Substrate contacts are provided by residues histidine 308 and 322-323 (FG).

The protein belongs to the metallo-dependent hydrolases superfamily. DHOase family. Class I DHOase subfamily. The cofactor is Zn(2+).

It carries out the reaction (S)-dihydroorotate + H2O = N-carbamoyl-L-aspartate + H(+). The protein operates within pyrimidine metabolism; UMP biosynthesis via de novo pathway; (S)-dihydroorotate from bicarbonate: step 3/3. In terms of biological role, catalyzes the reversible cyclization of carbamoyl aspartate to dihydroorotate. The chain is Dihydroorotase from Bacillus pumilus (strain SAFR-032).